Consider the following 277-residue polypeptide: Putative gamma-glutamylcyclotransferase YkqA (277 aa).

8 to 11 (YGTL) serves as a coordination point for substrate. Glu-205 functions as the Proton acceptor in the catalytic mechanism.

Belongs to the gamma-glutamylcyclotransferase family.

In terms of biological role, putative gamma-glutamylcyclotransferase. The chain is Putative gamma-glutamylcyclotransferase YkqA (ykqA) from Bacillus subtilis (strain 168).